Consider the following 688-residue polypeptide: Polyribonucleotide nucleotidyltransferase (688 aa).

Asp-484 and Asp-490 together coordinate Mg(2+). Residues 550–609 (PTTEIFNVAPDKIVEIIGQGGRVIKEIVEKFEVKIDLNKPSGEVKIMGNKERVLKTKEFI) form the KH domain. The region spanning 626–688 (DEVLEAQVKR…NKGKIALDLA (63 aa)) is the S1 motif domain.

This sequence belongs to the polyribonucleotide nucleotidyltransferase family. The cofactor is Mg(2+).

Its subcellular location is the cytoplasm. It catalyses the reaction RNA(n+1) + phosphate = RNA(n) + a ribonucleoside 5'-diphosphate. Involved in mRNA degradation. Catalyzes the phosphorolysis of single-stranded polyribonucleotides processively in the 3'- to 5'-direction. The sequence is that of Polyribonucleotide nucleotidyltransferase from Helicobacter pylori (strain P12).